Consider the following 119-residue polypeptide: Beta-2-microglobulin (119 aa).

The signal sequence occupies residues 1-20 (MARFVVVPLFVLLSLFGLEA). An Ig-like C1-type domain is found at 25–114 (PKIQVYSRYP…VTFSTPKTVK (90 aa)). An intrachain disulfide couples C45 to C100.

It belongs to the beta-2-microglobulin family. As to quaternary structure, heterodimer of an alpha chain and a beta chain. Beta-2-microglobulin is the beta-chain of major histocompatibility complex class I molecules.

The protein localises to the secreted. Component of the class I major histocompatibility complex (MHC). Involved in the presentation of peptide antigens to the immune system. This Saguinus niger (Black tamarin) protein is Beta-2-microglobulin (B2M).